Consider the following 2431-residue polypeptide: Nucleoprotein TPR (2431 aa).

The disordered stretch occupies residues 1-48 (MTSGGSASRSGHRGVPMTSRGFDGSRRGSLRRAGARETASEAADGAAP). The segment at 77–87 (AVLQQVLERPE) is sufficient for interaction with TPR. A necessary for interaction with HSF1 region spans residues 88 to 191 (LNKLPKSTQN…GIQSQFTRAK (104 aa)). Residues 98–444 (KLEKFLAEQQ…SATKRKGAIL (347 aa)) adopt a coiled-coil conformation. An N6-acetyllysine mark is found at Lys-326, Lys-386, and Lys-419. A Phosphoserine modification is found at Ser-453. Residues 486-678 (EKQENKRINK…ESRQHQMQLV (193 aa)) are a coiled coil. Lys-502, Lys-531, and Lys-551 each carry N6-acetyllysine. Residues 511 to 587 (LKRQREEYER…LMELEEARGN (77 aa)) form a necessary for association to the NPC region. 3 positions are modified to phosphoserine: Ser-596, Ser-597, and Ser-706. A coiled-coil region spans residues 736–1246 (STEAIEAKAA…IEKLSDKVVT (511 aa)). 4 positions are modified to N6-acetyllysine: Lys-787, Lys-797, Lys-822, and Lys-829. The segment covering 989–998 (LASQSTQRTG) has biased composition (polar residues). The segment at 989 to 1011 (LASQSTQRTGKGQPGDRDDVDDL) is disordered. Residues 1002–1011 (PGDRDDVDDL) show a composition bias toward basic and acidic residues. Phosphoserine is present on Ser-1259. 2 coiled-coil regions span residues 1289-1494 (EVAQ…LDAK) and 1547-1700 (VQEM…QRDE). Residues 1292-1394 (QVESLRYRQR…NAELSEKSGM (103 aa)) are necessary for interaction with HSF1. A compositionally biased stretch (basic and acidic residues) spans 1689–1701 (EHQERHLEQRDEP). Positions 1689–1744 (EHQERHLEQRDEPQEPTNKAPEQQRQITLKTTPASGERGIASTSDPPTANIKPTPV) are disordered. Residues 1703–1722 (EPTNKAPEQQRQITLKTTPA) show a composition bias toward polar residues. At Lys-1760 the chain carries N6-acetyllysine. Thr-1762 carries the post-translational modification Phosphothreonine. Over residues 1873-1898 (SSPVERPSTSTAVFGTVSATPSSSLP) the composition is skewed to polar residues. Residues 1873 to 2193 (SSPVERPSTS…TPGIGGMQQH (321 aa)) form a disordered region. The segment at 1882–1937 (STAVFGTVSATPSSSLPKRTREEEEDSTMEAGDQVSEDTVEMPLPKKLKMVTPVGT) is sufficient and essential for mediating its nuclear import. Acidic residues predominate over residues 1937–1951 (TEEEVMAEESTDGEA). A compositionally biased stretch (polar residues) spans 1954–1963 (QAYNQDSQDS). Position 1963 is a phosphoserine (Ser-1963). The segment covering 1994 to 2005 (QSDQQTTSSQDG) has biased composition (low complexity). Acidic residues-rich tracts occupy residues 2016-2057 (DSDD…EDSN) and 2067-2088 (DGYE…ETEE). Positions 2100 to 2132 (ADSQNSGEGNTSAAESSFSQEVAREQQPTSASE) are enriched in polar residues. Phosphoserine occurs at positions 2102, 2105, 2116, 2118, and 2141. Omega-N-methylarginine occurs at positions 2174 and 2179. Phosphothreonine occurs at positions 2184 and 2205. A Phosphoserine modification is found at Ser-2223. At Arg-2231 the chain carries Omega-N-methylarginine. The span at 2295–2312 (ESTTSDASEHASQSVPMV) shows a compositional bias: polar residues. Residues 2295–2431 (ESTTSDASEH…RGGINRGNIN (137 aa)) form a disordered region. Residues 2313 to 2325 (TTSTGTLSTTNET) are compositionally biased toward low complexity. The span at 2327–2340 (AGDDGDEVFVEAES) shows a compositional bias: acidic residues. The span at 2341-2351 (EGISSEAGLEI) shows a compositional bias: low complexity. Positions 2353 to 2367 (SQQEEEPVQASDESD) are enriched in acidic residues. Residues 2368 to 2388 (LPSTSQDPPSSSSVDTSSSQP) are compositionally biased toward low complexity. Arg-2411, Arg-2413, and Arg-2422 each carry asymmetric dimethylarginine. Residues 2420 to 2431 (GGRGGINRGNIN) are compositionally biased toward gly residues.

It belongs to the TPR family. As to quaternary structure, homodimer. Part of the nuclear pore complex (NPC). Associates with the XPO1/CRM1-mediated nuclear export complex, the Importin alpha/Importin beta receptor and the dynein 1 complex. Interacts (via C-terminal domain) with the KPNB1; the interaction occurs in a RanGTP-dependent manner. Interacts (via C-terminal region and phosphorylated form) with MAPK1/ERK2 (via phosphorylated form); the interaction requires dimerization of MAPK1/ERK2 and increases following EGF stimulation. Interacts with MAPK3/ERK1; the interaction increases following EGF stimulation. Interacts (via coiled coil region) with NUP153; the interaction is direct. Interacts with HSF1; the interaction increases in a stress-responsive manner and stimulates export of stress-induced HSP70 mRNA. Interacts with huntingtin/HTT; the interaction is inhibited by aggregated huntingtin/HTT forms with expanded polyglutamine stretch. Interacts with MAD1L1 (via N-terminal region), MAD2L1, and TTK; the interactions occurs in a microtubule-independent manner. Interacts (via middle region) with DYNLL1. Interacts with DCTN1, dynein, NUP153 and tubulin. Interacts with MTA1. Interacts with IFI204 (via C-terminal region). Interacts with IFI203. Interacts with ZC3HC1; this interaction mediates ZC3HC1 nuclear envelopes (NE)-association but also required for proper positioning of a substantial amount of TPR at the nuclear basket (NB). Phosphorylated. Phosphorylation occurs on serine and threonine residues (comprised in the C-terminal region) by MAPK1/ERK2 and stabilizes the interaction between these two proteins. As to expression, expressed in the heart, liver, kidney, spleen, lung and skeletal muscles.

The protein localises to the nucleus. Its subcellular location is the nucleus membrane. It is found in the nucleus envelope. The protein resides in the nuclear pore complex. It localises to the cytoplasm. The protein localises to the cytoskeleton. Its subcellular location is the spindle. It is found in the chromosome. The protein resides in the centromere. It localises to the kinetochore. Functionally, component of the nuclear pore complex (NPC), a complex required for the trafficking across the nuclear envelope. Functions as a scaffolding element in the nuclear phase of the NPC essential for normal nucleocytoplasmic transport of proteins and mRNAs, plays a role in the establishment of nuclear-peripheral chromatin compartmentalization in interphase, and in the mitotic spindle checkpoint signaling during mitosis. Involved in the quality control and retention of unspliced mRNAs in the nucleus; in association with NUP153, regulates the nuclear export of unspliced mRNA species bearing constitutive transport element (CTE) in a NXF1- and KHDRBS1-independent manner. Negatively regulates both the association of CTE-containing mRNA with large polyribosomes and translation initiation. Does not play any role in Rev response element (RRE)-mediated export of unspliced mRNAs. Implicated in nuclear export of mRNAs transcribed from heat shock gene promoters; associates both with chromatin in the HSP70 promoter and with mRNAs transcribed from this promoter under stress-induced conditions. Plays a limited role in the regulation of nuclear protein export. Modulates the nucleocytoplasmic transport of activated MAPK1/ERK2 and huntingtin/HTT and may serve as a docking site for the XPO1/CRM1-mediated nuclear export complex. Also plays a role as a structural and functional element of the perinuclear chromatin distribution; involved in the formation and/or maintenance of NPC-associated perinuclear heterochromatin exclusion zones (HEZs). Finally, acts as a spatial regulator of the spindle-assembly checkpoint (SAC) response ensuring a timely and effective recruitment of spindle checkpoint proteins like MAD1L1 and MAD2L1 to unattached kinetochore during the metaphase-anaphase transition before chromosome congression. Its N-terminus is involved in activation of oncogenic kinases. In Mus musculus (Mouse), this protein is Nucleoprotein TPR.